Here is an 842-residue protein sequence, read N- to C-terminus: Translation initiation factor IF-2 (842 aa).

Disordered regions lie at residues 42-91 (ETKR…NLSS) and 139-253 (LQKQ…NQEP). Basic and acidic residues-rich tracts occupy residues 176 to 190 (IEKR…EERH) and 199 to 214 (SEIR…DERR). A tr-type G domain is found at 340–509 (PRPPVVTIMG…LLQAEMLDLK (170 aa)). Positions 349–356 (GHVDHGKT) are G1. GTP is bound at residue 349–356 (GHVDHGKT). Residues 374-378 (GITQH) form a G2 region. Residues 395–398 (DTPG) are G3. Residues 395 to 399 (DTPGH) and 449 to 452 (NKID) contribute to the GTP site. Positions 449–452 (NKID) are G4. The interval 485–487 (SAK) is G5.

The protein belongs to the TRAFAC class translation factor GTPase superfamily. Classic translation factor GTPase family. IF-2 subfamily.

Its subcellular location is the cytoplasm. Functionally, one of the essential components for the initiation of protein synthesis. Protects formylmethionyl-tRNA from spontaneous hydrolysis and promotes its binding to the 30S ribosomal subunits. Also involved in the hydrolysis of GTP during the formation of the 70S ribosomal complex. In Bartonella tribocorum (strain CIP 105476 / IBS 506), this protein is Translation initiation factor IF-2.